Consider the following 106-residue polypeptide: N(2)-fixation sustaining protein CowN (106 aa).

Belongs to the CowN family.

In terms of biological role, is required to sustain N(2)-dependent growth in the presence of low levels of carbon monoxide (CO). Probably acts by protecting the N(2) fixation ability of the nitrogenase complex, which is inactivated in the presence of CO. This is N(2)-fixation sustaining protein CowN from Denitrovibrio acetiphilus (strain DSM 12809 / NBRC 114555 / N2460).